Here is a 321-residue protein sequence, read N- to C-terminus: Glucokinase (321 aa).

8–13 is a binding site for ATP; the sequence is GDVGGT.

It belongs to the bacterial glucokinase family.

The protein localises to the cytoplasm. It carries out the reaction D-glucose + ATP = D-glucose 6-phosphate + ADP + H(+). The chain is Glucokinase from Shigella sonnei (strain Ss046).